A 103-amino-acid polypeptide reads, in one-letter code: UPF0235 protein RL4503 (103 aa).

The protein belongs to the UPF0235 family.

The protein is UPF0235 protein RL4503 of Rhizobium johnstonii (strain DSM 114642 / LMG 32736 / 3841) (Rhizobium leguminosarum bv. viciae).